The primary structure comprises 325 residues: MPRPGRNTYSDQKPPYSYISLTAMAIQSSPEKMLPLSEIYKFIMDRFPYYRENTQRWQNSLRHNLSFNDCFIKIPRRPDQPGKGSFWALHPSCGDMFENGSFLRRRKRFKVLKSDHLAPSKPADAAQYLQQQAKLRLSALAASGTHLPQMPAAAYNLGGVAQPSGFKHPFAIENIIAREYKMPGGLAFSAMQPVPAAYPLPNQLTTMGSSLGTGWPHVYGSAGMIDSATPISMTSGDYSAYGVPLKPLCHAAGQTLPAIPVPIKPTPAAVPALPALPAPIPTLLSNSPPSLSPTSSQTATSQSSPATPSETLTSPASALHSVAVH.

A DNA-binding region (fork-head) is located at residues 12–103 (QKPPYSYISL…GDMFENGSFL (92 aa)). Residues 284–309 (LSNSPPSLSPTSSQTATSQSSPATPS) are compositionally biased toward low complexity. Positions 284–325 (LSNSPPSLSPTSSQTATSQSSPATPSETLTSPASALHSVAVH) are disordered.

As to expression, expressed widespread in the early developing ventricular zone of the neural tube and later restricted to areas of the spinal cord, hindbrain, thalamus and hypothalamus. Expressed in epithelial cells of developing and adult mammary glands.

The protein localises to the nucleus. Functionally, transcription factor expressed by neural progenitor cells in specific regions of the embryonic neuroepithelium. Essential for the mammillary nuclei maintenance. Negatively regulates the proliferation of oligodendrocyte progenitors and promotes oligodendrocyte maturation. Also expressed in mammary glands, plays a role in lactation, controls development of mammary glands and the inferior colliculi of the midbrain in the central nervous system that regulates the milk-ejection reflex. The polypeptide is Forkhead box protein B1 (Foxb1) (Mus musculus (Mouse)).